Here is a 173-residue protein sequence, read N- to C-terminus: Superoxide dismutase [Cu-Zn] (173 aa).

The first 19 residues, 1 to 19, serve as a signal peptide directing secretion; sequence MKRFSLAILALVVATGAQA. Residues histidine 67, histidine 69, and histidine 92 each contribute to the Cu cation site. Positions 72–113 are disordered; the sequence is GSCQPATKDGKASAAESAGGHLDPQNTGKHEGPEGAGHLGDL. A disulfide bond links cysteine 74 and cysteine 169. Zn(2+)-binding residues include histidine 92, histidine 101, histidine 109, and aspartate 112. Histidine 147 provides a ligand contact to Cu cation.

The protein belongs to the Cu-Zn superoxide dismutase family. Monomer. It depends on Cu cation as a cofactor. Zn(2+) serves as cofactor.

It localises to the periplasm. The catalysed reaction is 2 superoxide + 2 H(+) = H2O2 + O2. Its function is as follows. Destroys radicals which are normally produced within the cells and which are toxic to biological systems. This is Superoxide dismutase [Cu-Zn] (sodC) from Escherichia coli O157:H7.